Consider the following 160-residue polypeptide: Ribonuclease HI (160 aa).

In terms of domain architecture, RNase H type-1 spans 4–147; the sequence is TPNSVTLYTD…CDRLAVAAYQ (144 aa). The Mg(2+) site is built by Asp13, Glu52, Asp74, and Asp139.

The protein belongs to the RNase H family. In terms of assembly, monomer. Requires Mg(2+) as cofactor.

The protein localises to the cytoplasm. It carries out the reaction Endonucleolytic cleavage to 5'-phosphomonoester.. Functionally, endonuclease that specifically degrades the RNA of RNA-DNA hybrids. This is Ribonuclease HI (rnhA) from Synechocystis sp. (strain ATCC 27184 / PCC 6803 / Kazusa).